We begin with the raw amino-acid sequence, 249 residues long: 4-hydroxy-tetrahydrodipicolinate reductase (249 aa).

NAD(+) contacts are provided by residues D32, 74–76 (GTT), and 99–102 (SANF). H134 (proton donor/acceptor) is an active-site residue. H135 contributes to the (S)-2,3,4,5-tetrahydrodipicolinate binding site. K138 functions as the Proton donor in the catalytic mechanism. 144–145 (GT) serves as a coordination point for (S)-2,3,4,5-tetrahydrodipicolinate.

This sequence belongs to the DapB family.

The protein localises to the cytoplasm. The catalysed reaction is (S)-2,3,4,5-tetrahydrodipicolinate + NAD(+) + H2O = (2S,4S)-4-hydroxy-2,3,4,5-tetrahydrodipicolinate + NADH + H(+). The enzyme catalyses (S)-2,3,4,5-tetrahydrodipicolinate + NADP(+) + H2O = (2S,4S)-4-hydroxy-2,3,4,5-tetrahydrodipicolinate + NADPH + H(+). The protein operates within amino-acid biosynthesis; L-lysine biosynthesis via DAP pathway; (S)-tetrahydrodipicolinate from L-aspartate: step 4/4. In terms of biological role, catalyzes the conversion of 4-hydroxy-tetrahydrodipicolinate (HTPA) to tetrahydrodipicolinate. The chain is 4-hydroxy-tetrahydrodipicolinate reductase from Chlorobaculum parvum (strain DSM 263 / NCIMB 8327) (Chlorobium vibrioforme subsp. thiosulfatophilum).